Here is a 525-residue protein sequence, read N- to C-terminus: Keratin, type II cytoskeletal 71 (525 aa).

The segment at Met-1–Gln-131 is head. A coil 1A region spans residues Glu-132–Leu-167. Residues Glu-132–Met-445 enclose the IF rod domain. The tract at residues Gln-168 to Tyr-186 is linker 1. Positions Ile-187–Ile-278 are coil 1B. The interval Gln-279 to Ile-302 is linker 12. Positions Ile-303–Glu-441 are coil 2. A tail region spans residues Glu-442–Arg-525. Residues Val-492–Arg-525 are disordered. The span at Gly-495–Leu-510 shows a compositional bias: basic and acidic residues.

This sequence belongs to the intermediate filament family. In terms of assembly, heterodimer of a type I and a type II keratin. Associates with KRT16 and/or KRT17.

It localises to the cytoplasm. The protein localises to the cytoskeleton. Its function is as follows. Plays a central role in hair formation. Essential component of keratin intermediate filaments in the inner root sheath (IRS) of the hair follicle. The chain is Keratin, type II cytoskeletal 71 (KRT71) from Bos taurus (Bovine).